A 188-amino-acid polypeptide reads, in one-letter code: Ubiquitin-like protein 4B (188 aa).

One can recognise a Ubiquitin-like domain in the interval 1-76 (MFLTVKLLLG…INVIMRPPED (76 aa)). The segment at 146–188 (EEKEAPAVASELEQNNGGGGGGGGTGGEGGGKKEEEEGEEADQ) is disordered. Residues 161–174 (NGGGGGGGGTGGEG) are compositionally biased toward gly residues.

In terms of tissue distribution, expressed specifically in post-meiotic male germ cells of the testis. Abundantly expressed in stage 14-16 spermatids.

The protein resides in the cytoplasm. This is Ubiquitin-like protein 4B (Ubl4b) from Mus musculus (Mouse).